We begin with the raw amino-acid sequence, 26 residues long: Protein YsdD (26 aa).

Residues 1 to 26 (MTIDKNWLNRSNKDPGRSLRFTHQPV) are disordered.

This chain is Protein YsdD, found in Escherichia coli (strain K12).